A 904-amino-acid chain; its full sequence is Alanine--tRNA ligase (904 aa).

Positions 600, 604, 704, and 708 each coordinate Zn(2+).

The protein belongs to the class-II aminoacyl-tRNA synthetase family. The cofactor is Zn(2+).

It localises to the cytoplasm. The catalysed reaction is tRNA(Ala) + L-alanine + ATP = L-alanyl-tRNA(Ala) + AMP + diphosphate. Functionally, catalyzes the attachment of alanine to tRNA(Ala) in a two-step reaction: alanine is first activated by ATP to form Ala-AMP and then transferred to the acceptor end of tRNA(Ala). Also edits incorrectly charged Ser-tRNA(Ala) and Gly-tRNA(Ala) via its editing domain. The protein is Alanine--tRNA ligase of Metallosphaera sedula (strain ATCC 51363 / DSM 5348 / JCM 9185 / NBRC 15509 / TH2).